The following is a 153-amino-acid chain: Satratoxin biosynthesis SC2 cluster transcription factor SAT15 (153 aa).

The protein localises to the nucleus. In terms of biological role, transcriptional regulator that may regulate the expression of the satratoxin biosynthesis SC2 cluster, one of the 3 clusters involved in the biosynthesis of satratoxins, trichothecene mycotoxins that are associated with human food poisonings. The chain is Satratoxin biosynthesis SC2 cluster transcription factor SAT15 from Stachybotrys chartarum (strain CBS 109288 / IBT 7711) (Toxic black mold).